Consider the following 166-residue polypeptide: Lipoprotein signal peptidase (166 aa).

The next 4 helical transmembrane spans lie at Ala-9 to Leu-29, Ala-45 to Leu-65, Trp-71 to Leu-91, and Phe-100 to Val-120. Active-site residues include Asp-126 and Asp-144. Residues Trp-135–Val-155 form a helical membrane-spanning segment.

Belongs to the peptidase A8 family.

The protein localises to the cell inner membrane. It carries out the reaction Release of signal peptides from bacterial membrane prolipoproteins. Hydrolyzes -Xaa-Yaa-Zaa-|-(S,diacylglyceryl)Cys-, in which Xaa is hydrophobic (preferably Leu), and Yaa (Ala or Ser) and Zaa (Gly or Ala) have small, neutral side chains.. It functions in the pathway protein modification; lipoprotein biosynthesis (signal peptide cleavage). Its function is as follows. This protein specifically catalyzes the removal of signal peptides from prolipoproteins. The polypeptide is Lipoprotein signal peptidase (Burkholderia ambifaria (strain ATCC BAA-244 / DSM 16087 / CCUG 44356 / LMG 19182 / AMMD) (Burkholderia cepacia (strain AMMD))).